The primary structure comprises 209 residues: Large ribosomal subunit protein uL3 (209 aa).

The tract at residues 128–152 (QARGPMSHGSRYHRRPGSMGPVDPN) is disordered.

This sequence belongs to the universal ribosomal protein uL3 family. Part of the 50S ribosomal subunit. Forms a cluster with proteins L14 and L19.

One of the primary rRNA binding proteins, it binds directly near the 3'-end of the 23S rRNA, where it nucleates assembly of the 50S subunit. The sequence is that of Large ribosomal subunit protein uL3 from Halalkalibacterium halodurans (strain ATCC BAA-125 / DSM 18197 / FERM 7344 / JCM 9153 / C-125) (Bacillus halodurans).